A 250-amino-acid chain; its full sequence is Pre-protein VI (250 aa).

The propeptide occupies Met1–Gly33. The segment at Ala34–Tyr54 is amphipathic alpha-helix essential for membrane lytic activity. An involved in endosomal membrane lysis region spans residues Ser36–Asn53. Residues Gly48–Gln74 form an interaction with hexon protein region. Residues Leu67–Phe76 carry the Nuclear export signal motif. Residues Ile103–Glu147 are disordered. Residue Ser124 is modified to Phosphoserine; by host. Positions Gly127 to Thr140 are enriched in basic and acidic residues. The Nuclear localization signal motif lies at Lys131–Pro135. Residue Thr143 is modified to Phosphothreonine; by host. Positions Pro148–Tyr151 match the PPXY motif motif. A compositionally biased stretch (low complexity) spans Pro206–Ser220. Positions Pro206–Ser226 are disordered. The Nuclear export signal motif lies at Ser231–Gln242. Residues Leu233–Leu239 are interaction with hexon protein. The interval Gly240–Phe250 is binds to importin alpha/beta, involved in hexon nuclear import. A Nuclear localization signal motif is present at residues Lys245–Arg248.

Belongs to the adenoviridae protein VI family. In terms of assembly, interacts with hexon protein; this interaction allows nuclear import of hexon trimers and possibly pre-capsid assembly. Interacts (via C-terminal NLS) with importin alpha/beta. As to quaternary structure, interacts (via PPxY motif) with host NEDD4 ubiquitine ligase; this interaction might play a role in virus intracellular transport during entry. Part of a complex composed of the core-capsid bridging protein, the endosome lysis protein VI and the hexon-linking protein VIII; these interactions bridge the virus core to the capsid. Interacts with peripentonal hexons; this interaction stabilizes the capsid by gluing two peripentonal hexons together and joining them with an adjacent group-of-nine hexon. Heterodimer with the viral protease; disulfide-linked. Interacts with the viral protease. Ubiquitinated by Nedd4 following partial capsid disassembly; which might play a role in intracellular virus movement during entry. In terms of processing, contains the major nuclear import and export signals. Proteolytically removed during virion maturation. The processing of the C-terminus turns the precursor into a mature viral structural protein and abrogates its ability to promote hexon import and act as a potential chaperone protein.

The protein localises to the host nucleus. The protein resides in the host cytoplasm. It is found in the virion. Its function is as follows. During virus assembly, promotes hexon trimers nuclear import through nuclear pore complexes via an importin alpha/beta-dependent mechanism. By analogy to herpesviruses capsid assembly, might act as a chaperone to promote the formation of the icosahedral capsid. In terms of biological role, structural component of the virion that provides increased stability to the particle shell through its interaction with the core-capsid bridging protein and the hexon-linking protein VIII. Fibers shedding during virus entry into host cell allows the endosome lysis protein to be exposed as a membrane-lytic peptide. Exhibits pH-independent membrane fragmentation activity and probably mediates viral rapid escape from host endosome via organellar membrane lysis. It is not clear if it then remains partially associated with the capsid and involved in the intracellular microtubule-dependent transport of capsid to the nucleus, or if it is lost during endosomal penetration. Functionally, cofactor that activates the viral protease. Binds to viral protease in a 1:1 ratio. The polypeptide is Pre-protein VI (Human adenovirus C serotype 2 (HAdV-2)).